The primary structure comprises 408 residues: MKKAIILAIGNELVEGLIVDTNSKYLAQRLKEFGYYIVRTETLPDNFDIMVLRIKEAIKDADLIITSGGLGPTEDDLTREAVAHSIGRKLLKNEAIAQELINRAIKYYGKAPESVVKQAFVIENAEVIDNKVGTAPGQMLKYDGKIIILLPGPPVELIPMFESILEKLKTNDSLYTRRIKTIGIPEAVLMDEYKDILYSNSRITIATMASYERGVEVRFTGPIEIKDEIDYVVNTLLPKLGESVYALDDKEMHDVVYELLVKNNYTVSFAESCTGGLISSTFVDIPGVSSVFKGSVVAYSNEAKIEILGVSKETIEKFGAVSEECVIEMAQGAKKIFNSNFSVAVSGIAGPSGGSEKKPVGTVCIAVCSPNGINSATYNLRGDRQMIRKRSTLIAFDMLRRGIIKCQG.

Belongs to the CinA family.

This is CinA-like protein from Fervidobacterium nodosum (strain ATCC 35602 / DSM 5306 / Rt17-B1).